We begin with the raw amino-acid sequence, 289 residues long: Glycerol facilitator-aquaporin gla (289 aa).

2 helical membrane-spanning segments follow: residues 10 to 30 and 41 to 61; these read ITEFVGTALLIIMGNGAVANV and SWMIIGWGYGLGVMLPAVAFG. The short motif at 68–70 is the NPA 1 element; it reads NPA. 3 helical membrane-spanning segments follow: residues 87-107, 151-171, and 209-229; these read AQYIIAQVLGAMFGQLLIVMV, FVGSFVLFFGAVAATNIFFGS, and MVAHLFLGFLVMGLVVALGGP. The NPA 2 motif lies at 235-237; sequence NPA. The helical transmembrane segment at 264 to 284 threads the bilayer; the sequence is WYAWVPVLAPILASLAAVALF.

The protein belongs to the MIP/aquaporin (TC 1.A.8) family.

Its subcellular location is the cell membrane. Its function is as follows. Mixed channel protein that transports both water and glycerol. The sequence is that of Glycerol facilitator-aquaporin gla (gla) from Lactococcus lactis subsp. lactis (strain IL1403) (Streptococcus lactis).